A 169-amino-acid chain; its full sequence is Glycine-rich RNA-binding protein 10 (169 aa).

Residues 6–84 (YRCFVGGLAW…RTITVNEAQS (79 aa)) enclose the RRM domain. Disordered regions lie at residues 80 to 101 (NEAQ…YGGR) and 121 to 169 (GYGS…GGGW). Residues 85–101 (RGGGGGGGRGGGGYGGR) show a composition bias toward gly residues.

As to expression, expressed only in roots and stems.

Functionally, possibly has a role in RNA transcription or processing during stress. The protein is Glycine-rich RNA-binding protein 10 (GRP10) of Brassica napus (Rape).